Here is a 362-residue protein sequence, read N- to C-terminus: GTPase Obg (362 aa).

The Obg domain occupies 1–159; sequence MKFLDEAKVY…KTIWLRLKLI (159 aa). An OBG-type G domain is found at 160 to 327; it reads ADAGLVGLPN…VLRALRDVIV (168 aa). Residues 166–173, 191–195, 212–215, 279–282, and 308–310 contribute to the GTP site; these read GLPNAGKS, FTTLH, DIPG, SQID, and SAV. Mg(2+)-binding residues include S173 and T193. The disordered stretch occupies residues 332-362; the sequence is EEKPAKVPKLRHRDMIVSDEGEGEDGADDQP. A compositionally biased stretch (acidic residues) spans 348–362; that stretch reads VSDEGEGEDGADDQP.

Belongs to the TRAFAC class OBG-HflX-like GTPase superfamily. OBG GTPase family. As to quaternary structure, monomer. It depends on Mg(2+) as a cofactor.

Its subcellular location is the cytoplasm. Its function is as follows. An essential GTPase which binds GTP, GDP and possibly (p)ppGpp with moderate affinity, with high nucleotide exchange rates and a fairly low GTP hydrolysis rate. Plays a role in control of the cell cycle, stress response, ribosome biogenesis and in those bacteria that undergo differentiation, in morphogenesis control. The protein is GTPase Obg of Rhizobium etli (strain CIAT 652).